We begin with the raw amino-acid sequence, 526 residues long: Zinc finger protein 69 homolog (526 aa).

Positions 1–39 (MPQQLLITLPTEASTWVKLQHPKKAVEGAPLWEDVTKMF) constitute an SCAN box domain. The KRAB domain maps to 76-147 (LTFKDISIDF…EKEGPGDPSS (72 aa)). 9 C2H2-type zinc fingers span residues 271–293 (YECN…MRIH), 299–321 (FRCK…QRIH), 327–349 (FECE…HRTH), 355–377 (YVCD…LRTH), 383–405 (FTCN…IRIH), 411–433 (YACT…QRIH), 439–461 (YKCK…KTVH), 467–489 (YECN…QRHH), and 495–517 (YECN…HEIH).

The protein belongs to the krueppel C2H2-type zinc-finger protein family. Expressed in visceral and subcutaneous adipose tissue.

It localises to the nucleus. Putative transcription factor that appears to regulate lipid metabolism. This Homo sapiens (Human) protein is Zinc finger protein 69 homolog (ZFP69).